The primary structure comprises 224 residues: 4-aminobenzoate synthase (224 aa).

6 residues coordinate Fe(2+): glutamate 77, histidine 84, glutamate 138, histidine 169, aspartate 173, and histidine 176.

Belongs to the CADD family. As to quaternary structure, homodimer. The cofactor is Fe(2+). Mn(2+) serves as cofactor.

Involved in de novo para-aminobenzoate (PABA) biosynthesis. Acts as a self-sacrificing or 'suicide' enzyme that utilizes its own active site tyrosine residue(s) as the substrate for PABA synthesis. The side chain of the tyrosine residue is released from the protein backbone via cleavage of the C(alpha)-C(beta) bond, leaving a glycine in place of the original tyrosine residue. Reaction requires O(2) and a reduced dimetal cofactor. The protein is 4-aminobenzoate synthase of Chlamydia pneumoniae (Chlamydophila pneumoniae).